Consider the following 138-residue polypeptide: ATP synthase epsilon chain (138 aa).

A disordered region spans residues 88–119 (DREEARSTLSAAQARLDQSEQSEDKQERYEAQ). A compositionally biased stretch (basic and acidic residues) spans 109–119 (SEDKQERYEAQ).

Belongs to the ATPase epsilon chain family. In terms of assembly, F-type ATPases have 2 components, CF(1) - the catalytic core - and CF(0) - the membrane proton channel. CF(1) has five subunits: alpha(3), beta(3), gamma(1), delta(1), epsilon(1). CF(0) has three main subunits: a, b and c.

The protein resides in the cellular thylakoid membrane. Produces ATP from ADP in the presence of a proton gradient across the membrane. The protein is ATP synthase epsilon chain of Acaryochloris marina (strain MBIC 11017).